We begin with the raw amino-acid sequence, 183 residues long: Large ribosomal subunit protein uL6 (183 aa).

It belongs to the universal ribosomal protein uL6 family. As to quaternary structure, part of the 50S ribosomal subunit.

In terms of biological role, this protein binds to the 23S rRNA, and is important in its secondary structure. It is located near the subunit interface in the base of the L7/L12 stalk, and near the tRNA binding site of the peptidyltransferase center. The protein is Large ribosomal subunit protein uL6 of Chlamydia trachomatis serovar D (strain ATCC VR-885 / DSM 19411 / UW-3/Cx).